The sequence spans 373 residues: Beta sliding clamp (373 aa).

Belongs to the beta sliding clamp family. In terms of assembly, forms a ring-shaped head-to-tail homodimer around DNA which binds and tethers DNA polymerases and other proteins to the DNA. The DNA replisome complex has a single clamp-loading complex (3 tau and 1 each of delta, delta', psi and chi subunits) which binds 3 Pol III cores (1 core on the leading strand and 2 on the lagging strand) each with a beta sliding clamp dimer. Additional proteins in the replisome are other copies of gamma, psi and chi, Ssb, DNA helicase and RNA primase.

Its subcellular location is the cytoplasm. Its function is as follows. Confers DNA tethering and processivity to DNA polymerases and other proteins. Acts as a clamp, forming a ring around DNA (a reaction catalyzed by the clamp-loading complex) which diffuses in an ATP-independent manner freely and bidirectionally along dsDNA. Initially characterized for its ability to contact the catalytic subunit of DNA polymerase III (Pol III), a complex, multichain enzyme responsible for most of the replicative synthesis in bacteria; Pol III exhibits 3'-5' exonuclease proofreading activity. The beta chain is required for initiation of replication as well as for processivity of DNA replication. This is Beta sliding clamp (dnaN) from Mycoplasmopsis pulmonis (strain UAB CTIP) (Mycoplasma pulmonis).